The primary structure comprises 922 residues: MEGPGQDTEDALRRSLDPEGYEDTKGSRTSLGTMSNPLVSDVDLEAAGSRQPTAHRDTYEGYVELHELVLDSRKDPCWMEAGRWLHLEESMEPGGAWGSHLPLLTYHSLLELHRAFAKGVVLLDVAANSLAAVAHVLLDQLIYEGQLKPQHRDDVLRALLLRHKHPSEAESVWTLPAAQLQCSDGEQKDADERALLRDQRAVEMRELHGAGQSPSRAQLGPQLHQQLPEDTEATLVLVACAAFLEQPLLALVRLGAPCPDAVLAVPLPVRFVLTVLGPDSPRLSYHEIRRAAATVMADRVFRRDAYLCGGRAELLGGLQGFLEASIVLPPQEVPSEQHLHALIPLQRHAVRRRYQHPDTVRSPGGPTAPKDTGDKGQAPQDDDPLLRTRRPFGGLVRDIRRRYPKYLSDIRDALNPQCLAAVIFIYFAALSPAITFGGLLGEKTRGMMGVSELLLSTSVQCLLFSLLSAQPLLVVGFSGPLLVFEEAFFRFCEDHGLEYIVGRVWIGFWLILLVLLVVACEGTVLVRYLSRYTQEIFSFLISLIFIYETFAKLVTIFEAHPLQQSYDTDVSTEPSVPKPNTALLSLVLMAGTFFLALFLRQFKNSVFLPGKVRRLIGDFGVPISIFVMALADFFIKDTYTQKLKVPRGLEVTNGTARGWFIHPMGSATPFPIWMMFASPVPALLVFILIFLETQITTLIVSKPERKLVKGSGFHLDLLLIVAMGGLAALFGMPWLSATTVRTITHANALTVVGKSAVPGERAHIVEVKEQRLSGLLVAVLIGVSILMEPILKYIPLAVLFGIFLYMGVTSLFGIQLFDRILLLLMPPKYHPKEPYVTRVKTWRITSSPLTQILVVALLWGVKVSPASLRCPFVLVLTVPLRRLLLPRIFSEIELKCLDTDDAVVTFEEAEGQDVYNEVQMPS.

Disordered stretches follow at residues 1–36 (MEGP…TMSN) and 355–389 (QHPD…LRTR). The Cytoplasmic segment spans residues 1 to 416 (MEGPGQDTED…LSDIRDALNP (416 aa)). A compositionally biased stretch (basic and acidic residues) spans 10 to 26 (DALRRSLDPEGYEDTKG). Over residues 27 to 36 (SRTSLGTMSN) the composition is skewed to polar residues. Residues 417–440 (QCLAAVIFIYFAALSPAITFGGLL) traverse the membrane as a helical segment. Residues 441 to 448 (GEKTRGMM) lie on the Extracellular side of the membrane. Residues 449 to 469 (GVSELLLSTSVQCLLFSLLSA) form a helical membrane-spanning segment. Residues 470 to 472 (QPL) are Cytoplasmic-facing. The discontinuously helical transmembrane segment at 473–489 (LVVGFSGPLLVFEEAFF) threads the bilayer. The Extracellular segment spans residues 490 to 498 (RFCEDHGLE). A helical membrane pass occupies residues 499–519 (YIVGRVWIGFWLILLVLLVVA). Residues 520–531 (CEGTVLVRYLSR) lie on the Cytoplasmic side of the membrane. A helical membrane pass occupies residues 532–554 (YTQEIFSFLISLIFIYETFAKLV). Residues 555-581 (TIFEAHPLQQSYDTDVSTEPSVPKPNT) lie on the Extracellular side of the membrane. The chain crosses the membrane as a helical span at residues 582 to 602 (ALLSLVLMAGTFFLALFLRQF). Residues 603 to 613 (KNSVFLPGKVR) are Cytoplasmic-facing. A helical membrane pass occupies residues 614–634 (RLIGDFGVPISIFVMALADFF). Residues 635 to 674 (IKDTYTQKLKVPRGLEVTNGTARGWFIHPMGSATPFPIWM) are Extracellular-facing. A glycan (N-linked (GlcNAc...) asparagine) is linked at asparagine 653. A helical membrane pass occupies residues 675-695 (MFASPVPALLVFILIFLETQI). At 696–711 (TTLIVSKPERKLVKGS) the chain is on the cytoplasmic side. The chain crosses the membrane as a helical span at residues 712-730 (GFHLDLLLIVAMGGLAALF). Residues 731 to 748 (GMPWLSATTVRTITHANA) traverse the membrane as a discontinuously helical segment. Over 749 to 771 (LTVVGKSAVPGERAHIVEVKEQR) the chain is Cytoplasmic. 2 consecutive transmembrane segments (helical) span residues 772-792 (LSGL…PILK) and 793-811 (YIPL…VTSL). Residues 812 to 849 (FGIQLFDRILLLLMPPKYHPKEPYVTRVKTWRITSSPL) are Cytoplasmic-facing. Positions 850 to 880 (TQILVVALLWGVKVSPASLRCPFVLVLTVPL) form an intramembrane region, discontinuously helical. Residues 881–922 (RRLLLPRIFSEIELKCLDTDDAVVTFEEAEGQDVYNEVQMPS) are Cytoplasmic-facing.

This sequence belongs to the anion exchanger (TC 2.A.31) family. In terms of assembly, a dimer in solution, it spans the membrane asymmetrically and appears to be tetrameric. Erythrocytes.

The protein localises to the cell membrane. The protein resides in the basolateral cell membrane. The enzyme catalyses hydrogencarbonate(in) + chloride(out) = hydrogencarbonate(out) + chloride(in). Functions both as a transporter that mediates electroneutral anion exchange across the cell membrane and as a structural protein. Major integral membrane glycoprotein of the erythrocyte membrane; required for normal flexibility and stability of the erythrocyte membrane and for normal erythrocyte shape via the interactions of its cytoplasmic domain with cytoskeletal proteins, glycolytic enzymes, and hemoglobin. Functions as a transporter that mediates the 1:1 exchange of inorganic anions across the erythrocyte membrane. Mediates chloride-bicarbonate exchange in the kidney, and is required for normal acidification of the urine. This is Band 3 anion transport protein (SLC4A1) from Gallus gallus (Chicken).